Consider the following 211-residue polypeptide: UPF0329 protein ECU07_1880/ECU10_0020 (211 aa).

This sequence belongs to the UPF0329 family.

In Encephalitozoon cuniculi (strain GB-M1) (Microsporidian parasite), this protein is UPF0329 protein ECU07_1880/ECU10_0020.